The primary structure comprises 41 residues: MKIKNSLKSLKARHRDNRLVRRKGRMYIINKLNPRFKARQG.

Belongs to the bacterial ribosomal protein bL36 family.

This chain is Large ribosomal subunit protein bL36, found in Rhizobium rhizogenes (strain K84 / ATCC BAA-868) (Agrobacterium radiobacter).